A 307-amino-acid chain; its full sequence is MRIIFAGTPDFAVASLRAAAQRHEVVAVYTQPDRPAGRGRGLTPSPVKIEAIARGIAVFQPQTLRSPEALATLRSLNADLMVVVAYGLILPNAVLAVPTHGCWNVHASLLPRWRGAAPIQRAIEAGDTETGVCLMQMEAGLDIGPVLLSQRIEIGEQETGGQLHDRLAALGAQVLSDGLGLLRAGIRPVAQPQPAEGVTYAHKLDKAQARLDWAQPAQELARRVRAFNPWPVAEAILAGERVRLHGAVALELAHQQPPGSLLAASKQGIDIACGQGALRVRVLQREGGKAITAADYLNARRDLLALR.

A (6S)-5,6,7,8-tetrahydrofolate-binding site is contributed by 108-111; it reads SLLP.

Belongs to the Fmt family.

The enzyme catalyses L-methionyl-tRNA(fMet) + (6R)-10-formyltetrahydrofolate = N-formyl-L-methionyl-tRNA(fMet) + (6S)-5,6,7,8-tetrahydrofolate + H(+). In terms of biological role, attaches a formyl group to the free amino group of methionyl-tRNA(fMet). The formyl group appears to play a dual role in the initiator identity of N-formylmethionyl-tRNA by promoting its recognition by IF2 and preventing the misappropriation of this tRNA by the elongation apparatus. This Xanthomonas oryzae pv. oryzae (strain MAFF 311018) protein is Methionyl-tRNA formyltransferase.